Reading from the N-terminus, the 241-residue chain is Methylthioribulose-1-phosphate dehydratase (241 aa).

C96 contributes to the substrate binding site. 2 residues coordinate Zn(2+): H114 and H116. E138 functions as the Proton donor/acceptor in the catalytic mechanism. H194 contributes to the Zn(2+) binding site.

The protein belongs to the aldolase class II family. MtnB subfamily. It depends on Zn(2+) as a cofactor.

It is found in the cytoplasm. It catalyses the reaction 5-(methylsulfanyl)-D-ribulose 1-phosphate = 5-methylsulfanyl-2,3-dioxopentyl phosphate + H2O. It participates in amino-acid biosynthesis; L-methionine biosynthesis via salvage pathway; L-methionine from S-methyl-5-thio-alpha-D-ribose 1-phosphate: step 2/6. Catalyzes the dehydration of methylthioribulose-1-phosphate (MTRu-1-P) into 2,3-diketo-5-methylthiopentyl-1-phosphate (DK-MTP-1-P). Functions in the methionine salvage pathway. May play a role in apoptosis. This Danio rerio (Zebrafish) protein is Methylthioribulose-1-phosphate dehydratase.